The primary structure comprises 206 residues: Ion-translocating oxidoreductase complex subunit G (206 aa).

A helical transmembrane segment spans residues 9 to 29; that stretch reads GITLALFAAGSTGLTAVINQM. T174 carries the post-translational modification FMN phosphoryl threonine.

The protein belongs to the RnfG family. The complex is composed of six subunits: RsxA, RsxB, RsxC, RsxD, RsxE and RsxG. FMN is required as a cofactor.

Its subcellular location is the cell inner membrane. Its function is as follows. Part of a membrane-bound complex that couples electron transfer with translocation of ions across the membrane. Required to maintain the reduced state of SoxR. This is Ion-translocating oxidoreductase complex subunit G from Salmonella typhimurium (strain LT2 / SGSC1412 / ATCC 700720).